The primary structure comprises 66 residues: Large ribosomal subunit protein uL29 (66 aa).

The protein belongs to the universal ribosomal protein uL29 family.

This Rhizobium etli (strain CIAT 652) protein is Large ribosomal subunit protein uL29.